Consider the following 414-residue polypeptide: 3-phosphoshikimate 1-carboxyvinyltransferase (414 aa).

3 residues coordinate 3-phosphoshikimate: Lys20, Ser21, and Arg25. Lys20 serves as a coordination point for phosphoenolpyruvate. Phosphoenolpyruvate is bound by residues Gly85 and Arg113. 6 residues coordinate 3-phosphoshikimate: Ser154, Ser155, Gln156, Ser181, Asp296, and Lys323. Gln156 is a phosphoenolpyruvate binding site. The active-site Proton acceptor is Asp296. Residues Arg327, Arg371, and Lys395 each contribute to the phosphoenolpyruvate site.

The protein belongs to the EPSP synthase family. Monomer.

The protein localises to the cytoplasm. The catalysed reaction is 3-phosphoshikimate + phosphoenolpyruvate = 5-O-(1-carboxyvinyl)-3-phosphoshikimate + phosphate. Its pathway is metabolic intermediate biosynthesis; chorismate biosynthesis. Functionally, catalyzes the transfer of the enolpyruvyl moiety of phosphoenolpyruvate (PEP) to the 5-hydroxyl of shikimate-3-phosphate (S3P) to produce enolpyruvyl shikimate-3-phosphate and inorganic phosphate. This chain is 3-phosphoshikimate 1-carboxyvinyltransferase, found in Saccharolobus islandicus (strain M.14.25 / Kamchatka #1) (Sulfolobus islandicus).